The following is a 292-amino-acid chain: MAPPTRLQVPRPGTAVPYTVLLGWLLAQVARAADTTGRAYNLTWKSTNFKTILEWEPKSIDHVYTVQISTRLENWKSKCFLTAETECDLTDEVVKDVGQTYMARVLSYPARNGNTTGFPEEPPFRNSPEFTPYLDTNLGQPTIQSFEQVGTKLNVTVQDARTLVRRNGTFLSLRAVFGKDLNYTLYYWRASSTGKKTATTNTNEFLIDVDKGENYCFSVQAVIPSRKRKQRSPESLTECTSREQGRAREMFFIIGAVVVVALLIIVLSVTVYKCRKARAGPSGKESSPLNIA.

The signal sequence occupies residues 1–32 (MAPPTRLQVPRPGTAVPYTVLLGWLLAQVARA). Residues 33 to 250 (ADTTGRAYNL…SREQGRAREM (218 aa)) are Extracellular-facing. Fibronectin type-III domains are found at residues 35 to 126 (TTGR…PFRN) and 148 to 240 (QVGT…TECT). The N-linked (GlcNAc...) asparagine glycan is linked to Asn41. 2 short sequence motifs (WKS motif) span residues 44-46 (WKS) and 75-77 (WKS). A disulfide bond links Cys79 and Cys87. Residues Asn114, Asn154, Asn167, and Asn182 are each glycosylated (N-linked (GlcNAc...) asparagine). Cysteines 216 and 239 form a disulfide. A helical transmembrane segment spans residues 251–271 (FFIIGAVVVVALLIIVLSVTV). The Cytoplasmic segment spans residues 272–292 (YKCRKARAGPSGKESSPLNIA). Residue Cys274 is the site of S-palmitoyl cysteine attachment.

It belongs to the tissue factor family. As to quaternary structure, interacts with HSPE; the interaction, inhibited by heparin, promotes the generation of activated factor X and activates coagulation in the presence of activated factor VII. In terms of tissue distribution, brain, heart.

Its subcellular location is the membrane. Functionally, initiates blood coagulation by forming a complex with circulating factor VII or VIIa. The [TF:VIIa] complex activates factors IX or X by specific limited proteolysis. TF plays a role in normal hemostasis by initiating the cell-surface assembly and propagation of the coagulation protease cascade. This chain is Tissue factor (F3), found in Oryctolagus cuniculus (Rabbit).